Here is a 132-residue protein sequence, read N- to C-terminus: Large ribosomal subunit protein uL14 (132 aa).

It belongs to the universal ribosomal protein uL14 family. In terms of assembly, part of the 50S ribosomal subunit. Forms a cluster with proteins L3 and L24e, part of which may contact the 16S rRNA in 2 intersubunit bridges.

Functionally, binds to 23S rRNA. Forms part of two intersubunit bridges in the 70S ribosome. This chain is Large ribosomal subunit protein uL14, found in Picrophilus torridus (strain ATCC 700027 / DSM 9790 / JCM 10055 / NBRC 100828 / KAW 2/3).